Consider the following 703-residue polypeptide: Elongation factor G 2 (703 aa).

A tr-type G domain is found at 8–291 (ELYRNIGIVA…AVIDYLPAPS (284 aa)). Residues 17–24 (AHVDAGKT), 89–93 (DTPGH), and 143–146 (NKMD) each bind GTP.

The protein belongs to the TRAFAC class translation factor GTPase superfamily. Classic translation factor GTPase family. EF-G/EF-2 subfamily.

The protein resides in the cytoplasm. In terms of biological role, catalyzes the GTP-dependent ribosomal translocation step during translation elongation. During this step, the ribosome changes from the pre-translocational (PRE) to the post-translocational (POST) state as the newly formed A-site-bound peptidyl-tRNA and P-site-bound deacylated tRNA move to the P and E sites, respectively. Catalyzes the coordinated movement of the two tRNA molecules, the mRNA and conformational changes in the ribosome. This Pseudomonas putida (strain ATCC 47054 / DSM 6125 / CFBP 8728 / NCIMB 11950 / KT2440) protein is Elongation factor G 2 (fusB).